We begin with the raw amino-acid sequence, 353 residues long: Photosystem II protein D1 (353 aa).

T2 is subject to N-acetylthreonine. T2 is modified (phosphothreonine). Helical transmembrane passes span 29 to 46, 118 to 133, and 142 to 156; these read YIGWFGVLMIPTLLTATS, HFLLGVACYMGREWEL, and WIAVAYSAPVAAATA. Residue H118 participates in chlorophyll a binding. Pheophytin a is bound at residue Y126. D170 and E189 together coordinate [CaMn4O5] cluster. A helical membrane pass occupies residues 197–218; it reads FHMLGVAGVFGGSLFSAMHGSL. Residue H198 coordinates chlorophyll a. Residues H215 and 264–265 contribute to the a quinone site; that span reads SF. H215 is a binding site for Fe cation. H272 provides a ligand contact to Fe cation. Residues 274 to 288 traverse the membrane as a helical segment; sequence FLAAWPVAGIWFTAL. [CaMn4O5] cluster contacts are provided by H332, E333, D342, and A344. A propeptide spanning residues 345-353 is cleaved from the precursor; that stretch reads AVESISIGG.

This sequence belongs to the reaction center PufL/M/PsbA/D family. In terms of assembly, PSII is composed of 1 copy each of membrane proteins PsbA, PsbB, PsbC, PsbD, PsbE, PsbF, PsbH, PsbI, PsbJ, PsbK, PsbL, PsbM, PsbT, PsbX, PsbY, PsbZ, Psb30/Ycf12, at least 3 peripheral proteins of the oxygen-evolving complex and a large number of cofactors. It forms dimeric complexes. It depends on The D1/D2 heterodimer binds P680, chlorophylls that are the primary electron donor of PSII, and subsequent electron acceptors. It shares a non-heme iron and each subunit binds pheophytin, quinone, additional chlorophylls, carotenoids and lipids. D1 provides most of the ligands for the Mn4-Ca-O5 cluster of the oxygen-evolving complex (OEC). There is also a Cl(-1) ion associated with D1 and D2, which is required for oxygen evolution. The PSII complex binds additional chlorophylls, carotenoids and specific lipids. as a cofactor. Post-translationally, tyr-161 forms a radical intermediate that is referred to as redox-active TyrZ, YZ or Y-Z. C-terminally processed by CTPA; processing is essential to allow assembly of the oxygen-evolving complex and thus photosynthetic growth.

Its subcellular location is the plastid. The protein resides in the chloroplast thylakoid membrane. The enzyme catalyses 2 a plastoquinone + 4 hnu + 2 H2O = 2 a plastoquinol + O2. Functionally, photosystem II (PSII) is a light-driven water:plastoquinone oxidoreductase that uses light energy to abstract electrons from H(2)O, generating O(2) and a proton gradient subsequently used for ATP formation. It consists of a core antenna complex that captures photons, and an electron transfer chain that converts photonic excitation into a charge separation. The D1/D2 (PsbA/PsbD) reaction center heterodimer binds P680, the primary electron donor of PSII as well as several subsequent electron acceptors. In Pinus contorta (Shore pine), this protein is Photosystem II protein D1.